Here is a 152-residue protein sequence, read N- to C-terminus: UPF0225 protein KPK_2103 (152 aa).

The protein belongs to the UPF0225 family.

The chain is UPF0225 protein KPK_2103 from Klebsiella pneumoniae (strain 342).